We begin with the raw amino-acid sequence, 240 residues long: uncharacterized protein (240 aa).

The next 3 helical transmembrane spans lie at 12 to 32 (ICIH…ILMS), 66 to 86 (IQVL…FVLV), and 89 to 109 (ISGY…IYFF). Asn-129 and Asn-157 each carry an N-linked (GlcNAc...) asparagine; by host glycan.

The protein resides in the membrane. This is an uncharacterized protein from Acanthamoeba polyphaga mimivirus (APMV).